The sequence spans 311 residues: JNK1/MAPK8-associated membrane protein (311 aa).

Residues 1–57 are Lumenal-facing; the sequence is MAVDIQPACLGLYCGKTLLFKNGSSEIYGECGVCPRGQRTNAQKYCQPCTESPELYD. N-linked (GlcNAc...) asparagine glycosylation occurs at Asn22. Residues 58–78 traverse the membrane as a helical segment; that stretch reads WLYLGFMAMLPLVLHWFFIEW. Residues 79 to 87 are Cytoplasmic-facing; sequence YSGKKSSSA. Residues 88–108 form a helical membrane-spanning segment; sequence LFQHITALFECTMAAIITLLV. Residues 109-149 lie on the Lumenal side of the membrane; sequence SDPVGVLYIRSCRVLMLSDWYTMLYNPSPDYVTTVHCTHEA. Residues 150-170 form a helical membrane-spanning segment; it reads VYPLYTIVFVYYAFCLVLMML. Residues 171–188 are Cytoplasmic-facing; that stretch reads LRPLLVKKIACGLGKSDR. Residues 189-209 form a helical membrane-spanning segment; that stretch reads FKSIYAALYFFPILTVLQAVG. Gly210 is a topological domain (lumenal). Residues 211-231 form a helical membrane-spanning segment; sequence GLLYYAFPYIILVLSLVTLAV. Residues 232-250 lie on the Cytoplasmic side of the membrane; the sequence is YMSASEIENCYDLLVRKKR. The chain crosses the membrane as a helical span at residues 251–271; it reads LIVLFSHWLLHAYGIVSISRV. At 272-277 the chain is on the lumenal side; that stretch reads DRLEHD. The chain crosses the membrane as a helical span at residues 278 to 298; it reads LPLLALVPTPALFYLFTAKFT. The Cytoplasmic portion of the chain corresponds to 299–311; sequence EPSRILSEGANGH.

Interacts with RNF5 and MAPK8, but not with MAPK9. Binding to MAPK8 occurs before and after exposure to stress, such as UV irradiation. After exposure to stress, interacts with phosphorylated MAPK8. Competes with DUSP10 for MAPK8 binding. Associates with multiple components of the proteasome and with ERAD regulatory proteins, including AMFR/GP78, CANX, PSMC1, PSMC2, PSMC3/TBP1, PSMC5, PSMC6, PSMD8, SEC61-ALPHA and UFD1. In terms of processing, ubiquitinated by RNF5 via 'Lys-63'-linked ubiquitin linkage in a UBE2N-dependent manner. Ubiquitination decreases association with components of the proteasome and ERAD. As to expression, expressed in numerous tissues, including brain, spleen, thymus, liver, kidney and testis.

The protein localises to the endoplasmic reticulum membrane. Regulates the duration of MAPK8 activity in response to various stress stimuli. Facilitates degradation of misfolded endoplasmic reticulum (ER) proteins through the recruitment of components of the proteasome and endoplasmic reticulum-associated degradation (ERAD) system. This Mus musculus (Mouse) protein is JNK1/MAPK8-associated membrane protein (Jkamp).